The following is a 221-amino-acid chain: uncharacterized protein (221 aa).

Residues 40-162 (TIEVEPSPVQ…EPPEKVELSP (123 aa)) are disordered. A compositionally biased stretch (polar residues) spans 47 to 60 (PVQQDNPPISSEQA). The span at 82–92 (SSAQQEATAQT) shows a compositional bias: low complexity.

This is an uncharacterized protein from Homo sapiens (Human).